Here is a 197-residue protein sequence, read N- to C-terminus: Imidazoleglycerol-phosphate dehydratase (197 aa).

Belongs to the imidazoleglycerol-phosphate dehydratase family.

The protein localises to the cytoplasm. The catalysed reaction is D-erythro-1-(imidazol-4-yl)glycerol 3-phosphate = 3-(imidazol-4-yl)-2-oxopropyl phosphate + H2O. The protein operates within amino-acid biosynthesis; L-histidine biosynthesis; L-histidine from 5-phospho-alpha-D-ribose 1-diphosphate: step 6/9. This is Imidazoleglycerol-phosphate dehydratase from Methylocella silvestris (strain DSM 15510 / CIP 108128 / LMG 27833 / NCIMB 13906 / BL2).